We begin with the raw amino-acid sequence, 701 residues long: Translation initiation factor IF-2 (701 aa).

A compositionally biased stretch (basic and acidic residues) spans 48–62 (KIYKPEKAEQSEKSQ). The disordered stretch occupies residues 48 to 123 (KIYKPEKAEQ…EPKEMPSKIT (76 aa)). 2 stretches are compositionally biased toward low complexity: residues 63 to 89 (QKNT…NNKP) and 97 to 109 (NNKN…NNKQ). The segment covering 110-119 (PKQEEPKEMP) has biased composition (basic and acidic residues). The region spanning 203–372 (ERPAVVTIMG…VLTSEVQELK (170 aa)) is the tr-type G domain. The tract at residues 212–219 (GHVDHGKT) is G1. 212 to 219 (GHVDHGKT) lines the GTP pocket. Residues 237-241 (GITQH) form a G2 region. The tract at residues 258-261 (DTPG) is G3. Residues 258–262 (DTPGH) and 312–315 (NKID) each bind GTP. The tract at residues 312 to 315 (NKID) is G4. The G5 stretch occupies residues 348–350 (SAL).

It belongs to the TRAFAC class translation factor GTPase superfamily. Classic translation factor GTPase family. IF-2 subfamily.

It is found in the cytoplasm. In terms of biological role, one of the essential components for the initiation of protein synthesis. Protects formylmethionyl-tRNA from spontaneous hydrolysis and promotes its binding to the 30S ribosomal subunits. Also involved in the hydrolysis of GTP during the formation of the 70S ribosomal complex. The sequence is that of Translation initiation factor IF-2 from Staphylococcus saprophyticus subsp. saprophyticus (strain ATCC 15305 / DSM 20229 / NCIMB 8711 / NCTC 7292 / S-41).